The sequence spans 797 residues: Complex I intermediate-associated protein 84, mitochondrial (797 aa).

The N-terminal 69 residues, 1–69, are a transit peptide targeting the mitochondrion; sequence MRSHLARNAT…ALCTRTSKRT (69 aa).

It localises to the mitochondrion. Chaperone protein involved in the assembly of the mitochondrial NADH:ubiquinone oxidoreductase complex (complex I). This is Complex I intermediate-associated protein 84, mitochondrial (cia84) from Neurospora crassa (strain ATCC 24698 / 74-OR23-1A / CBS 708.71 / DSM 1257 / FGSC 987).